The sequence spans 512 residues: MAITKSTPAPLTGGTLWCVTIALSLATFMQMLDSTISNVAIPTISGFLGASTDEGTWVITSFGVANAIAIPVTGRLAQRIGELRLFLLSVTFFSLSSLMCSLSTNLDVLIFFRVVQGLMAGPLIPLSQSLLLRNYPPEKRTFALALWSMTVIIAPICGPILGGYICDNFSWGWIFLINVPMGIIVLTLCLTLLKGRETETSPVKMNLPGLTLLVLGVGGLQIMLDKGRDLDWFNSSTIIILTVVSVISLISLVIWESTSENPILDLSLFKSRNFTIGIVSITCAYLFYSGAIVLMPQLLQETMGYNAIWAGLAYAPIGIMPLLISPLIGRYGNKIDMRLLVTFSFLMYAVCYYWRSVTFMPTIDFTGIILPQFFQGFAVACFFLPLTTISFSGLPDNKFANASSMSNFFRTLSGSVGTSLTMTLWGRRESLHHSQLTATIDQFNPVFNSSSQIMDKYYGSLSGVLNEINNEITQQSLSISANEIFRMAAIAFILLTVLVWFAKPPFTAKGVG.

The Cytoplasmic segment spans residues 1 to 8; sequence MAITKSTP. A helical membrane pass occupies residues 9 to 29; sequence APLTGGTLWCVTIALSLATFM. A topological domain (periplasmic) is located at residue Gln-30. The helical transmembrane segment at 31 to 51 threads the bilayer; it reads MLDSTISNVAIPTISGFLGAS. Residues 52–53 are Cytoplasmic-facing; it reads TD. Residues 54 to 74 form a helical membrane-spanning segment; sequence EGTWVITSFGVANAIAIPVTG. Topologically, residues 75 to 84 are periplasmic; sequence RLAQRIGELR. 2 helical membrane passes run 85 to 105 and 106 to 126; these read LFLLSVTFFSLSSLMCSLSTN and LDVLIFFRVVQGLMAGPLIPL. At 127 to 141 the chain is on the periplasmic side; that stretch reads SQSLLLRNYPPEKRT. A helical membrane pass occupies residues 142 to 162; sequence FALALWSMTVIIAPICGPILG. The Cytoplasmic portion of the chain corresponds to 163 to 172; sequence GYICDNFSWG. Residues 173-193 form a helical membrane-spanning segment; the sequence is WIFLINVPMGIIVLTLCLTLL. Over 194–204 the chain is Periplasmic; that stretch reads KGRETETSPVK. A helical transmembrane segment spans residues 205–225; it reads MNLPGLTLLVLGVGGLQIMLD. At 226–234 the chain is on the cytoplasmic side; that stretch reads KGRDLDWFN. A helical membrane pass occupies residues 235–255; the sequence is SSTIIILTVVSVISLISLVIW. Residues 256–273 lie on the Periplasmic side of the membrane; sequence ESTSENPILDLSLFKSRN. The helical transmembrane segment at 274–294 threads the bilayer; sequence FTIGIVSITCAYLFYSGAIVL. Over 295-307 the chain is Cytoplasmic; it reads MPQLLQETMGYNA. The chain crosses the membrane as a helical span at residues 308 to 328; sequence IWAGLAYAPIGIMPLLISPLI. Residues 329–338 lie on the Periplasmic side of the membrane; it reads GRYGNKIDMR. The chain crosses the membrane as a helical span at residues 339–359; that stretch reads LLVTFSFLMYAVCYYWRSVTF. Residues 360–364 lie on the Cytoplasmic side of the membrane; the sequence is MPTID. The chain crosses the membrane as a helical span at residues 365 to 385; sequence FTGIILPQFFQGFAVACFFLP. At 386–486 the chain is on the periplasmic side; sequence LTTISFSGLP…LSISANEIFR (101 aa). Residues 487 to 507 traverse the membrane as a helical segment; that stretch reads MAAIAFILLTVLVWFAKPPFT. The Cytoplasmic portion of the chain corresponds to 508-512; the sequence is AKGVG.

It belongs to the major facilitator superfamily. EmrB family. In terms of assembly, part of the tripartite efflux system EmrYK-TolC, which is composed of an inner membrane transporter, EmrY, a membrane fusion protein, EmrK, and an outer membrane component, TolC. The complex forms a large protein conduit and can translocate molecules across both the inner and outer membranes.

It localises to the cell inner membrane. Functionally, part of the tripartite efflux system EmrYK-TolC, which confers resistance to various drugs. The polypeptide is Probable multidrug resistance protein EmrY (emrY) (Escherichia coli (strain K12)).